Reading from the N-terminus, the 187-residue chain is Ribosome-recycling factor (187 aa).

This sequence belongs to the RRF family.

The protein resides in the cytoplasm. Its function is as follows. Responsible for the release of ribosomes from messenger RNA at the termination of protein biosynthesis. May increase the efficiency of translation by recycling ribosomes from one round of translation to another. This chain is Ribosome-recycling factor, found in Flavobacterium johnsoniae (strain ATCC 17061 / DSM 2064 / JCM 8514 / BCRC 14874 / CCUG 350202 / NBRC 14942 / NCIMB 11054 / UW101) (Cytophaga johnsonae).